The primary structure comprises 125 residues: Small ribosomal subunit protein uS12 (125 aa).

The disordered stretch occupies residues 9 to 31 (RQGREVEKIKSKSPAMENSPQRR). 3-methylthioaspartic acid is present on aspartate 89.

It belongs to the universal ribosomal protein uS12 family. Part of the 30S ribosomal subunit. Contacts proteins S8 and S17. May interact with IF1 in the 30S initiation complex.

With S4 and S5 plays an important role in translational accuracy. In terms of biological role, interacts with and stabilizes bases of the 16S rRNA that are involved in tRNA selection in the A site and with the mRNA backbone. Located at the interface of the 30S and 50S subunits, it traverses the body of the 30S subunit contacting proteins on the other side and probably holding the rRNA structure together. The combined cluster of proteins S8, S12 and S17 appears to hold together the shoulder and platform of the 30S subunit. This Verminephrobacter eiseniae (strain EF01-2) protein is Small ribosomal subunit protein uS12.